We begin with the raw amino-acid sequence, 338 residues long: Mitochondrial E3 ubiquitin protein ligase 1 (338 aa).

Over 1-3 (MEF) the chain is Cytoplasmic. The chain crosses the membrane as a helical span at residues 4 to 24 (LHESVALGVDLLILGLCAREY). Over 25 to 227 (VHYKRTAKVL…LIKRFEDAKT (203 aa)) the chain is Mitochondrial intermembrane. A helical membrane pass occupies residues 228-248 (TTILKLVVCSTISAILVAFIA). The Cytoplasmic portion of the chain corresponds to 249 to 338 (KKLYRKRKQE…IVSKAAAFIA (90 aa)). The RING-type zinc finger occupies 290 to 326 (CVVCSTNPKEIILLPCGHVCLCEDCAQKISVTCPVCR).

As to quaternary structure, interacts with Marf. Auto-ubiquitinated.

It localises to the mitochondrion outer membrane. It catalyses the reaction S-ubiquitinyl-[E2 ubiquitin-conjugating enzyme]-L-cysteine + [acceptor protein]-L-lysine = [E2 ubiquitin-conjugating enzyme]-L-cysteine + N(6)-ubiquitinyl-[acceptor protein]-L-lysine.. Functionally, exhibits weak E3 ubiquitin-protein ligase activity. E3 ubiquitin ligases accept ubiquitin from an E2 ubiquitin-conjugating enzyme in the form of a thioester and then directly transfer the ubiquitin to targeted substrates. Plays a role in the control of mitochondrial morphology by promoting mitochondrial fission. Negatively regulates the mitochondrial fusion protein marf by promoting its ubiquitination, acting in a pathway that is parallel to the park/pink1 regulatory pathway. The sequence is that of Mitochondrial E3 ubiquitin protein ligase 1 from Drosophila melanogaster (Fruit fly).